The chain runs to 270 residues: MSGAKSMSYAEMFRRADGCAFVPFVVAGDPDMETSLEIIRTLVDAGADALEVGFPFSDPIADGTSVQGADLRALRAGMTTEKCFQLIERVREFTSIPIGLLVYYNLIYRMGVDEFYRRAAEAGVTGILAADLPPEEASDALRAAEKYDIDQIFIVAPTTGSERLKRISEVSSGFHYLVSVMGVTGARSRVEDATIELIKRVKAEGSLPVMVGFGVSRPEHVRMLRDAGADGVIVGSAIIDVISGNLGDRELMLQRIHEMAGTLKAAGGSG.

Active-site proton acceptor residues include Glu51 and Asp62.

Belongs to the TrpA family. Tetramer of two alpha and two beta chains.

It catalyses the reaction (1S,2R)-1-C-(indol-3-yl)glycerol 3-phosphate + L-serine = D-glyceraldehyde 3-phosphate + L-tryptophan + H2O. It participates in amino-acid biosynthesis; L-tryptophan biosynthesis; L-tryptophan from chorismate: step 5/5. In terms of biological role, the alpha subunit is responsible for the aldol cleavage of indoleglycerol phosphate to indole and glyceraldehyde 3-phosphate. The polypeptide is Tryptophan synthase alpha chain (Methanothermobacter thermautotrophicus (strain ATCC 29096 / DSM 1053 / JCM 10044 / NBRC 100330 / Delta H) (Methanobacterium thermoautotrophicum)).